The following is a 214-amino-acid chain: Thymidylate kinase (214 aa).

12–19 (GLDGSGKS) contributes to the ATP binding site.

The protein belongs to the thymidylate kinase family.

It carries out the reaction dTMP + ATP = dTDP + ADP. Its function is as follows. Phosphorylation of dTMP to form dTDP in both de novo and salvage pathways of dTTP synthesis. The chain is Thymidylate kinase from Bdellovibrio bacteriovorus (strain ATCC 15356 / DSM 50701 / NCIMB 9529 / HD100).